The following is a 455-amino-acid chain: tRNA modification GTPase MnmE (455 aa).

Arg-22 contacts (6S)-5-formyl-5,6,7,8-tetrahydrofolate. A disordered region spans residues 43-67 (RRATRAALRSPPSGPGPTGPGPEEG). (6S)-5-formyl-5,6,7,8-tetrahydrofolate contacts are provided by Glu-92 and Arg-132. In terms of domain architecture, TrmE-type G spans 228–381 (GLQVAVVGAP…LEAALESRAR (154 aa)). A K(+)-binding site is contributed by Asn-238. Residues 238–243 (NVGKSS), 257–263 (SDIAGTT), and 282–285 (DTAG) contribute to the GTP site. Ser-242 contacts Mg(2+). The K(+) site is built by Ser-257, Ile-259, and Thr-262. Thr-263 contributes to the Mg(2+) binding site. Residue Lys-455 participates in (6S)-5-formyl-5,6,7,8-tetrahydrofolate binding.

This sequence belongs to the TRAFAC class TrmE-Era-EngA-EngB-Septin-like GTPase superfamily. TrmE GTPase family. As to quaternary structure, homodimer. Heterotetramer of two MnmE and two MnmG subunits. Requires K(+) as cofactor.

It is found in the cytoplasm. Exhibits a very high intrinsic GTPase hydrolysis rate. Involved in the addition of a carboxymethylaminomethyl (cmnm) group at the wobble position (U34) of certain tRNAs, forming tRNA-cmnm(5)s(2)U34. The polypeptide is tRNA modification GTPase MnmE (Rhodospirillum rubrum (strain ATCC 11170 / ATH 1.1.1 / DSM 467 / LMG 4362 / NCIMB 8255 / S1)).